Reading from the N-terminus, the 880-residue chain is Probable potassium channel AKT5 (880 aa).

Residues 1–82 (MGIEKRKKMV…PFDPRYRAWD (82 aa)) lie on the Cytoplasmic side of the membrane. A helical membrane pass occupies residues 83 to 103 (WFLVILVLYTAWASPFEFGFL). At 104–111 (QTPRAPLS) the chain is on the extracellular side. A helical membrane pass occupies residues 112–132 (ILDNVVNGFFAVDIVLTFFVA). Residues 133–153 (FLDKATYLLVDDPKRIAWRYT) are Cytoplasmic-facing. A helical membrane pass occupies residues 154 to 174 (STWLIFDVVSTVPYELFGSLL). The Extracellular portion of the chain corresponds to 175-182 (HNTIQGYG). The chain crosses the membrane as a helical; Voltage-sensor span at residues 183-203 (IFSMLRLWRLHRVSKCFARLE). Over 204-217 (KDRKYNYFWIRCTK) the chain is Cytoplasmic. The helical transmembrane segment at 218–238 (LLLVSLFVVHCGACFCYSIAA) threads the bilayer. The Extracellular portion of the chain corresponds to 239-265 (HYPDPSMTFMALAEANWKQKSLLIRYV). Residues 266–285 (TAMYWSITTFSTTGYGDIHG) constitute an intramembrane region (pore-forming). Residues 286-291 (NNAEER) are Extracellular-facing. Residues 292–312 (AFILFYMIFNLGLLAYIIGNM) form a helical membrane-spanning segment. Residues 313–880 (TNLVVHVTSR…GDFLLLLKVS (568 aa)) are Cytoplasmic-facing. 396–517 (LFHGISNDLL…IMNNLLQHLK (122 aa)) provides a ligand contact to a nucleoside 3',5'-cyclic phosphate. ANK repeat units follow at residues 541 to 570 (DLPL…NPNE), 574 to 603 (NGRT…DPNI), 607 to 636 (EGSV…TLSF), 637 to 667 (DTVG…DISL), and 671 to 700 (NGTT…DMDK). One can recognise a KHA domain in the interval 809-880 (VGGVYPARVT…GDFLLLLKVS (72 aa)).

This sequence belongs to the potassium channel family. Plant (TC 1.A.1.4) subfamily. As to quaternary structure, the potassium channel is probably composed of a homo- or heterotetrameric complex of pore-forming subunits. As to expression, predominantly expressed in flowers.

The protein resides in the membrane. Functionally, probable potassium channel. May interact with the cytoskeleton or with regulatory proteins. This chain is Probable potassium channel AKT5 (AKT5), found in Arabidopsis thaliana (Mouse-ear cress).